The sequence spans 359 residues: Photosystem II protein D1 1 (359 aa).

Helical transmembrane passes span 29-46, 118-133, and 142-156; these read YVGW…AATT, HFLI…EWEL, and WICI…AASA. H118 lines the chlorophyll a pocket. Y126 serves as a coordination point for pheophytin a. D170 and E189 together coordinate [CaMn4O5] cluster. Residues 197-218 traverse the membrane as a helical segment; sequence FHMLGVAGVFGGSLFSAMHGSL. A chlorophyll a-binding site is contributed by H198. Residues H215 and 264-265 contribute to the a quinone site; that span reads SF. Position 215 (H215) interacts with Fe cation. Residue H272 participates in Fe cation binding. The helical transmembrane segment at 274-288 threads the bilayer; sequence FLAAWPVVGIWFTAL. 4 residues coordinate [CaMn4O5] cluster: H332, E333, D342, and A344. Positions 345–359 are excised as a propeptide; the sequence is AAESAPVALQAPAIG.

This sequence belongs to the reaction center PufL/M/PsbA/D family. PSII is composed of 1 copy each of membrane proteins PsbA, PsbB, PsbC, PsbD, PsbE, PsbF, PsbH, PsbI, PsbJ, PsbK, PsbL, PsbM, PsbT, PsbX, PsbY, PsbZ, Psb30/Ycf12, peripheral proteins PsbO, CyanoQ (PsbQ), PsbU, PsbV and a large number of cofactors. It forms dimeric complexes. The cofactor is The D1/D2 heterodimer binds P680, chlorophylls that are the primary electron donor of PSII, and subsequent electron acceptors. It shares a non-heme iron and each subunit binds pheophytin, quinone, additional chlorophylls, carotenoids and lipids. D1 provides most of the ligands for the Mn4-Ca-O5 cluster of the oxygen-evolving complex (OEC). There is also a Cl(-1) ion associated with D1 and D2, which is required for oxygen evolution. The PSII complex binds additional chlorophylls, carotenoids and specific lipids.. In terms of processing, tyr-161 forms a radical intermediate that is referred to as redox-active TyrZ, YZ or Y-Z. C-terminally processed by CtpA; processing is essential to allow assembly of the oxygen-evolving complex and thus photosynthetic growth.

It localises to the cellular thylakoid membrane. The enzyme catalyses 2 a plastoquinone + 4 hnu + 2 H2O = 2 a plastoquinol + O2. Its function is as follows. Photosystem II (PSII) is a light-driven water:plastoquinone oxidoreductase that uses light energy to abstract electrons from H(2)O, generating O(2) and a proton gradient subsequently used for ATP formation. It consists of a core antenna complex that captures photons, and an electron transfer chain that converts photonic excitation into a charge separation. The D1/D2 (PsbA/PsbD) reaction center heterodimer binds P680, the primary electron donor of PSII as well as several subsequent electron acceptors. This chain is Photosystem II protein D1 1, found in Synechococcus sp. (strain RCC307).